The sequence spans 195 residues: dITP/XTP pyrophosphatase (195 aa).

Substrate is bound at residue 9–14 (TGNKGK). The Mg(2+) site is built by E41 and D70. The active-site Proton acceptor is D70. Residues S71, 155-158 (FGYD), K178, and 183-184 (HR) each bind substrate.

The protein belongs to the HAM1 NTPase family. In terms of assembly, homodimer. Requires Mg(2+) as cofactor.

It catalyses the reaction XTP + H2O = XMP + diphosphate + H(+). It carries out the reaction dITP + H2O = dIMP + diphosphate + H(+). The enzyme catalyses ITP + H2O = IMP + diphosphate + H(+). Its function is as follows. Pyrophosphatase that catalyzes the hydrolysis of nucleoside triphosphates to their monophosphate derivatives, with a high preference for the non-canonical purine nucleotides XTP (xanthosine triphosphate), dITP (deoxyinosine triphosphate) and ITP. Seems to function as a house-cleaning enzyme that removes non-canonical purine nucleotides from the nucleotide pool, thus preventing their incorporation into DNA/RNA and avoiding chromosomal lesions. The chain is dITP/XTP pyrophosphatase from Haemophilus influenzae (strain ATCC 51907 / DSM 11121 / KW20 / Rd).